The sequence spans 227 residues: Translation initiation factor 6 (227 aa).

This sequence belongs to the eIF-6 family.

Functionally, binds to the 50S ribosomal subunit and prevents its association with the 30S ribosomal subunit to form the 70S initiation complex. This is Translation initiation factor 6 from Staphylothermus marinus (strain ATCC 43588 / DSM 3639 / JCM 9404 / F1).